Here is a 588-residue protein sequence, read N- to C-terminus: Intracellular maltogenic amylase (588 aa).

Positions 149, 155, 174, and 176 each coordinate Ca(2+). Substrate is bound by residues His249 and Arg325. Catalysis depends on Asp327, which acts as the Nucleophile. Glu356 functions as the Proton donor in the catalytic mechanism. Substrate-binding positions include 422–423, Asp467, and Arg471; that span reads HD.

This sequence belongs to the glycosyl hydrolase 13 family. BbmA subfamily. In terms of assembly, monomer or homodimer; in equilibrium. The cofactor is Ca(2+).

The protein localises to the cytoplasm. Functionally, hydrolyzes beta-cyclodextrin to maltose and glucose, soluble starch to maltose and glucose, and pullulan to panose with trace amounts of maltose and glucose. It is also able to hydrolyze acarbose. Can also exhibit a transglycosylation activity transferring glucose or maltose to another moiety of sugars by forming alpha-(1,6)- and alpha-(1,3)-glycosidic linkages upon the hydrolysis of substrate at concentrations of 5% or higher. The protein is Intracellular maltogenic amylase (bbmA) of Bacillus subtilis.